The primary structure comprises 223 residues: Thiamine-phosphate synthase (223 aa).

4-amino-2-methyl-5-(diphosphooxymethyl)pyrimidine contacts are provided by residues Q45–K49 and N77. D78 and D97 together coordinate Mg(2+). 4-amino-2-methyl-5-(diphosphooxymethyl)pyrimidine is bound at residue T116. 2-[(2R,5Z)-2-carboxy-4-methylthiazol-5(2H)-ylidene]ethyl phosphate is bound at residue S142–T144. Position 145 (K145) interacts with 4-amino-2-methyl-5-(diphosphooxymethyl)pyrimidine. Residues G173 and V193–T194 each bind 2-[(2R,5Z)-2-carboxy-4-methylthiazol-5(2H)-ylidene]ethyl phosphate.

The protein belongs to the thiamine-phosphate synthase family. It depends on Mg(2+) as a cofactor.

The enzyme catalyses 2-[(2R,5Z)-2-carboxy-4-methylthiazol-5(2H)-ylidene]ethyl phosphate + 4-amino-2-methyl-5-(diphosphooxymethyl)pyrimidine + 2 H(+) = thiamine phosphate + CO2 + diphosphate. It catalyses the reaction 2-(2-carboxy-4-methylthiazol-5-yl)ethyl phosphate + 4-amino-2-methyl-5-(diphosphooxymethyl)pyrimidine + 2 H(+) = thiamine phosphate + CO2 + diphosphate. It carries out the reaction 4-methyl-5-(2-phosphooxyethyl)-thiazole + 4-amino-2-methyl-5-(diphosphooxymethyl)pyrimidine + H(+) = thiamine phosphate + diphosphate. Its pathway is cofactor biosynthesis; thiamine diphosphate biosynthesis; thiamine phosphate from 4-amino-2-methyl-5-diphosphomethylpyrimidine and 4-methyl-5-(2-phosphoethyl)-thiazole: step 1/1. Its function is as follows. Condenses 4-methyl-5-(beta-hydroxyethyl)thiazole monophosphate (THZ-P) and 2-methyl-4-amino-5-hydroxymethyl pyrimidine pyrophosphate (HMP-PP) to form thiamine monophosphate (TMP). The sequence is that of Thiamine-phosphate synthase from Dictyoglomus thermophilum (strain ATCC 35947 / DSM 3960 / H-6-12).